A 202-amino-acid polypeptide reads, in one-letter code: LexA repressor (202 aa).

The segment at residues 29–49 is a DNA-binding region (H-T-H motif); the sequence is VREICTAVGLKSTSTVHSYLE. Active-site for autocatalytic cleavage activity residues include serine 125 and lysine 162.

This sequence belongs to the peptidase S24 family. As to quaternary structure, homodimer.

It catalyses the reaction Hydrolysis of Ala-|-Gly bond in repressor LexA.. Functionally, represses a number of genes involved in the response to DNA damage (SOS response), including recA and lexA. In the presence of single-stranded DNA, RecA interacts with LexA causing an autocatalytic cleavage which disrupts the DNA-binding part of LexA, leading to derepression of the SOS regulon and eventually DNA repair. This is LexA repressor from Clostridium kluyveri (strain NBRC 12016).